The chain runs to 190 residues: Pyridoxal 5'-phosphate synthase subunit PdxT (190 aa).

46-48 (GES) serves as a coordination point for L-glutamine. The Nucleophile role is filled by cysteine 78. L-glutamine is bound by residues arginine 105 and 133-134 (IR). Active-site charge relay system residues include histidine 169 and glutamate 171.

It belongs to the glutaminase PdxT/SNO family. In terms of assembly, in the presence of PdxS, forms a dodecamer of heterodimers. Only shows activity in the heterodimer.

The enzyme catalyses aldehydo-D-ribose 5-phosphate + D-glyceraldehyde 3-phosphate + L-glutamine = pyridoxal 5'-phosphate + L-glutamate + phosphate + 3 H2O + H(+). It catalyses the reaction L-glutamine + H2O = L-glutamate + NH4(+). It functions in the pathway cofactor biosynthesis; pyridoxal 5'-phosphate biosynthesis. In terms of biological role, catalyzes the hydrolysis of glutamine to glutamate and ammonia as part of the biosynthesis of pyridoxal 5'-phosphate. The resulting ammonia molecule is channeled to the active site of PdxS. The polypeptide is Pyridoxal 5'-phosphate synthase subunit PdxT (Niallia circulans (Bacillus circulans)).